Here is a 648-residue protein sequence, read N- to C-terminus: Probable alpha-galactosidase D (648 aa).

Positions methionine 1 to alanine 16 are cleaved as a signal peptide. N-linked (GlcNAc...) asparagine glycans are attached at residues asparagine 84 and asparagine 90. Residues cysteine 123 and cysteine 156 are joined by a disulfide bond. Aspartate 154 acts as the Nucleophile in catalysis. Glutamate 199 to aspartate 203 serves as a coordination point for substrate. Aspartate 221 acts as the Proton donor in catalysis. N-linked (GlcNAc...) asparagine glycans are attached at residues asparagine 339, asparagine 350, asparagine 505, and asparagine 572.

The protein belongs to the glycosyl hydrolase 27 family.

The protein resides in the secreted. It catalyses the reaction Hydrolysis of terminal, non-reducing alpha-D-galactose residues in alpha-D-galactosides, including galactose oligosaccharides, galactomannans and galactolipids.. Its function is as follows. Hydrolyzes a variety of simple alpha-D-galactoside as well as more complex molecules such as oligosaccharides and polysaccharides. The protein is Probable alpha-galactosidase D (aglD) of Aspergillus fumigatus (strain CBS 144.89 / FGSC A1163 / CEA10) (Neosartorya fumigata).